A 277-amino-acid chain; its full sequence is F420-dependent methylenetetrahydromethanopterin dehydrogenase (277 aa).

The tract at residues 249–277 (EKATDSVSRKPHGADGKRLNKTKLMEKPE) is disordered.

This sequence belongs to the MTD family.

It carries out the reaction 5,10-methylenetetrahydromethanopterin + oxidized coenzyme F420-(gamma-L-Glu)(n) + 2 H(+) = 5,10-methenyl-5,6,7,8-tetrahydromethanopterin + reduced coenzyme F420-(gamma-L-Glu)(n). Its pathway is one-carbon metabolism; methanogenesis from CO(2); 5,10-methylene-5,6,7,8-tetrahydromethanopterin from 5,10-methenyl-5,6,7,8-tetrahydromethanopterin (coenzyme F420 route): step 1/1. In terms of biological role, catalyzes the reversible reduction of methenyl-H(4)MPT(+) to methylene-H(4)MPT. In Methanococcus aeolicus (strain ATCC BAA-1280 / DSM 17508 / OCM 812 / Nankai-3), this protein is F420-dependent methylenetetrahydromethanopterin dehydrogenase.